The sequence spans 435 residues: Serine--tRNA ligase (435 aa).

Residue 242-244 (TAE) participates in L-serine binding. 273–275 (RSE) lines the ATP pocket. L-serine is bound at residue E296. 360-363 (EISS) is a binding site for ATP. S396 contacts L-serine.

The protein belongs to the class-II aminoacyl-tRNA synthetase family. Type-1 seryl-tRNA synthetase subfamily. In terms of assembly, homodimer. The tRNA molecule binds across the dimer.

It is found in the cytoplasm. It catalyses the reaction tRNA(Ser) + L-serine + ATP = L-seryl-tRNA(Ser) + AMP + diphosphate + H(+). The catalysed reaction is tRNA(Sec) + L-serine + ATP = L-seryl-tRNA(Sec) + AMP + diphosphate + H(+). It participates in aminoacyl-tRNA biosynthesis; selenocysteinyl-tRNA(Sec) biosynthesis; L-seryl-tRNA(Sec) from L-serine and tRNA(Sec): step 1/1. Functionally, catalyzes the attachment of serine to tRNA(Ser). Is also able to aminoacylate tRNA(Sec) with serine, to form the misacylated tRNA L-seryl-tRNA(Sec), which will be further converted into selenocysteinyl-tRNA(Sec). The protein is Serine--tRNA ligase of Vibrio cholerae serotype O1 (strain ATCC 39541 / Classical Ogawa 395 / O395).